A 466-amino-acid chain; its full sequence is Soluble pyridine nucleotide transhydrogenase (466 aa).

36-45 contacts FAD; that stretch reads ERYQNVGGGC.

This sequence belongs to the class-I pyridine nucleotide-disulfide oxidoreductase family. Homooligomer; probable homooctamer. FAD is required as a cofactor.

The protein localises to the cytoplasm. It catalyses the reaction NAD(+) + NADPH = NADH + NADP(+). Conversion of NADPH, generated by peripheral catabolic pathways, to NADH, which can enter the respiratory chain for energy generation. The chain is Soluble pyridine nucleotide transhydrogenase from Shigella flexneri.